A 272-amino-acid polypeptide reads, in one-letter code: Type III pantothenate kinase (272 aa).

An ATP-binding site is contributed by 6-13 (DVRNTHTV). Position 109–112 (109–112 (GADR)) interacts with substrate. The active-site Proton acceptor is Asp-111. Asp-131 provides a ligand contact to K(+). Ser-134 provides a ligand contact to ATP. Thr-186 provides a ligand contact to substrate.

Belongs to the type III pantothenate kinase family. Homodimer. It depends on NH4(+) as a cofactor. K(+) is required as a cofactor.

Its subcellular location is the cytoplasm. It carries out the reaction (R)-pantothenate + ATP = (R)-4'-phosphopantothenate + ADP + H(+). Its pathway is cofactor biosynthesis; coenzyme A biosynthesis; CoA from (R)-pantothenate: step 1/5. In terms of biological role, catalyzes the phosphorylation of pantothenate (Pan), the first step in CoA biosynthesis. The protein is Type III pantothenate kinase of Mycobacterium marinum (strain ATCC BAA-535 / M).